A 256-amino-acid chain; its full sequence is Protein FixA (256 aa).

The protein belongs to the ETF beta-subunit/FixA family. Heterodimer of FixA and FixB.

It functions in the pathway amine and polyamine metabolism; carnitine metabolism. In terms of biological role, required for anaerobic carnitine reduction. May bring reductant to CaiA. The protein is Protein FixA of Salmonella paratyphi B (strain ATCC BAA-1250 / SPB7).